The sequence spans 366 residues: MNSAPVPADTETRVNLLDLDREGMEAFFVRLGEKPFRASQLLQWIHQRGVTDFGLMTNLSKTLRSRLEAVSEIRPPELVLEQRSADGTRKWVLQVDAVNRVETVLIPDEGRNTLCVSSQVGCSLECSFCSTARQGFNRNLTTAEIIGQLWVAQHRLDEEQRISNVVLMGMGEPLLNFGNVVAATRLMMDDFAYGLSKRRVTLSTSGIVPALDRLAEVSDISLAVSLHAPDDTLRNELVPINRKYPIRELLAACKRYVGTENRRKVTFEYVMLDGVNDRPEHARALVRLLSHVPSKVNLIPFNPFPNSAYRCSHPETIARFAQTLQDAGLITTTRKTRGRDIDAACGQLVGKVNDRSRRQFRLHLAH.

Catalysis depends on Glu-102, which acts as the Proton acceptor. The 233-residue stretch at 108-340 folds into the Radical SAM core domain; sequence DEGRNTLCVS…TTTRKTRGRD (233 aa). A disulfide bridge links Cys-115 with Cys-345. [4Fe-4S] cluster-binding residues include Cys-122, Cys-126, and Cys-129. Residues 171–172, Ser-203, 225–227, and Asn-302 contribute to the S-adenosyl-L-methionine site; these read GE and SLH. Catalysis depends on Cys-345, which acts as the S-methylcysteine intermediate.

The protein belongs to the radical SAM superfamily. RlmN family. Requires [4Fe-4S] cluster as cofactor.

It localises to the cytoplasm. The catalysed reaction is adenosine(2503) in 23S rRNA + 2 reduced [2Fe-2S]-[ferredoxin] + 2 S-adenosyl-L-methionine = 2-methyladenosine(2503) in 23S rRNA + 5'-deoxyadenosine + L-methionine + 2 oxidized [2Fe-2S]-[ferredoxin] + S-adenosyl-L-homocysteine. It catalyses the reaction adenosine(37) in tRNA + 2 reduced [2Fe-2S]-[ferredoxin] + 2 S-adenosyl-L-methionine = 2-methyladenosine(37) in tRNA + 5'-deoxyadenosine + L-methionine + 2 oxidized [2Fe-2S]-[ferredoxin] + S-adenosyl-L-homocysteine. In terms of biological role, specifically methylates position 2 of adenine 2503 in 23S rRNA and position 2 of adenine 37 in tRNAs. m2A2503 modification seems to play a crucial role in the proofreading step occurring at the peptidyl transferase center and thus would serve to optimize ribosomal fidelity. The polypeptide is Dual-specificity RNA methyltransferase RlmN (Methylococcus capsulatus (strain ATCC 33009 / NCIMB 11132 / Bath)).